Consider the following 418-residue polypeptide: Putative ion-transport protein YfeO (418 aa).

12 helical membrane-spanning segments follow: residues 10–30 (LLLS…LIVV), 54–74 (DSPF…GLVI), 99–119 (ALPG…SLGP), 120–140 (EHPI…RLLP), 149–169 (ILAS…AALI), 186–206 (LFAP…FFHP), 223–243 (ILSG…AVWC), 258–278 (VLML…AGPV), 300–320 (DYFL…ASGF), 322–342 (GGRI…LHEH), 343–363 (VPAV…VLVV), and 386–406 (LLCI…IMMV).

This sequence belongs to the chloride channel (TC 2.A.49) family.

The protein resides in the cell membrane. The chain is Putative ion-transport protein YfeO from Escherichia fergusonii (strain ATCC 35469 / DSM 13698 / CCUG 18766 / IAM 14443 / JCM 21226 / LMG 7866 / NBRC 102419 / NCTC 12128 / CDC 0568-73).